The primary structure comprises 334 residues: UPF0104 membrane protein MTH_378 (334 aa).

Transmembrane regions (helical) follow at residues 7–27 (FYFF…MGPS), 33–53 (VYMA…GVLA), 120–140 (FFDL…VPVI), 142–162 (VIAL…YLVN), 218–238 (VIFI…YLVF), 247–267 (FSAV…SALP), 277–297 (MAGL…IALV), and 300–320 (IISF…YAGE).

Belongs to the UPF0104 family.

It is found in the cell membrane. In Methanothermobacter thermautotrophicus (strain ATCC 29096 / DSM 1053 / JCM 10044 / NBRC 100330 / Delta H) (Methanobacterium thermoautotrophicum), this protein is UPF0104 membrane protein MTH_378.